We begin with the raw amino-acid sequence, 281 residues long: Protein DOG1-like 1 (281 aa).

The 257-residue stretch at 9–265 folds into the DOG1 domain; sequence EKLQQDCYNE…HEWGKSREHR (257 aa). A disordered region spans residues 262–281; sequence REHRRLEASGGDSGGNVTRE.

The sequence is that of Protein DOG1-like 1 from Arabidopsis thaliana (Mouse-ear cress).